We begin with the raw amino-acid sequence, 474 residues long: Histone H2B.v2 (474 aa).

Disordered regions lie at residues 99 to 123 (FNNGGNNNNNNEQDNDLQEKEQNEL), 276 to 295 (TTFTQQEQQEQFNDDKISGD), and 328 to 394 (FNDN…VNNN). Composition is skewed to low complexity over residues 100-110 (NNGGNNNNNNE), 276-286 (TTFTQQEQQEQ), and 329-368 (NDNNNNNNNNNNNNNNNNNNNNNNININNDNDNNNNNNKN).

Belongs to the histone H2B family.

The sequence is that of Histone H2B.v2 (H2Bv2) from Dictyostelium discoideum (Social amoeba).